We begin with the raw amino-acid sequence, 329 residues long: Sex comb on midleg-like protein 1 (329 aa).

Phosphoserine occurs at positions 138 and 238. Residues 138–157 form a disordered region; the sequence is SPTLPVSRRENNSPSNLPRP. An SAM domain is found at 258 to 325; that stretch reads WSVEAVVLFL…YYIDRLKQGK (68 aa).

Belongs to the SCM family. Ubiquitous. Expressed in fetal and adult tissues.

It localises to the nucleus. Putative Polycomb group (PcG) protein. PcG proteins act by forming multiprotein complexes, which are required to maintain the transcriptionally repressive state of homeotic genes throughout development. May be involved in spermatogenesis during sexual maturation. In Homo sapiens (Human), this protein is Sex comb on midleg-like protein 1 (SCML1).